Reading from the N-terminus, the 256-residue chain is Small ribosomal subunit protein uS3 (256 aa).

A KH type-2 domain is found at 39–121; sequence IRTYLTKQLS…TIRINVVEVT (83 aa). The interval 227 to 256 is disordered; it reads RHEQKFPLQQPKRRQQRRRPTFEDRSAQEA. A compositionally biased stretch (basic and acidic residues) spans 246-256; sequence PTFEDRSAQEA.

The protein belongs to the universal ribosomal protein uS3 family. In terms of assembly, part of the 30S ribosomal subunit. Forms a tight complex with proteins S10 and S14.

Its function is as follows. Binds the lower part of the 30S subunit head. Binds mRNA in the 70S ribosome, positioning it for translation. The chain is Small ribosomal subunit protein uS3 from Synechococcus sp. (strain JA-2-3B'a(2-13)) (Cyanobacteria bacterium Yellowstone B-Prime).